A 217-amino-acid polypeptide reads, in one-letter code: MIQSAKELLKKGAAELGVQLDAAQLESLNLFAEELKKWNRKINLTAITGDEEIALKHLVDSLSLLKAVRGPGRLLDIGSGGGFPCIPVKIVQPDLEMVSVDAVVKKISFQKQAVRLLNLTGFTALHVRAETLAQEYAASFDWVVSRAFSDIPSFVAMALPVLKPEGRIVAMKGRSAAEEVEGAKDKLDALGAGVLEVMDFTLPGTGDARSLVVIGRN.

Residues Gly78, Phe83, 129–130 (AE), and Arg146 contribute to the S-adenosyl-L-methionine site.

It belongs to the methyltransferase superfamily. RNA methyltransferase RsmG family.

The protein resides in the cytoplasm. The catalysed reaction is guanosine(527) in 16S rRNA + S-adenosyl-L-methionine = N(7)-methylguanosine(527) in 16S rRNA + S-adenosyl-L-homocysteine. Functionally, specifically methylates the N7 position of guanine in position 527 of 16S rRNA. The chain is Ribosomal RNA small subunit methyltransferase G from Geobacter sp. (strain M21).